The primary structure comprises 697 residues: Potassium-transporting ATPase ATP-binding subunit (697 aa).

The next 4 helical transmembrane spans lie at 55-75, 79-99, 245-265, and 271-291; these read PIMF…FLPS, SIPG…VLFA, LTLI…YLGF, and VLVA…LSAI. Aspartate 324 functions as the 4-aspartylphosphate intermediate in the catalytic mechanism. ATP contacts are provided by residues aspartate 361, glutamate 365, 393–400, and lysine 412; that span reads FKAETRMS. Residues aspartate 535 and aspartate 539 each coordinate Mg(2+). The next 3 helical transmembrane spans lie at 605-625, 633-653, and 677-697; these read FAII…LNIM, AILS…PLAM, and GGVI…GLFI.

It belongs to the cation transport ATPase (P-type) (TC 3.A.3) family. Type IA subfamily. In terms of assembly, the system is composed of three essential subunits: KdpA, KdpB and KdpC.

The protein resides in the cell membrane. The catalysed reaction is K(+)(out) + ATP + H2O = K(+)(in) + ADP + phosphate + H(+). Functionally, part of the high-affinity ATP-driven potassium transport (or Kdp) system, which catalyzes the hydrolysis of ATP coupled with the electrogenic transport of potassium into the cytoplasm. This subunit is responsible for energy coupling to the transport system and for the release of the potassium ions to the cytoplasm. The sequence is that of Potassium-transporting ATPase ATP-binding subunit from Bacillus cereus (strain ATCC 14579 / DSM 31 / CCUG 7414 / JCM 2152 / NBRC 15305 / NCIMB 9373 / NCTC 2599 / NRRL B-3711).